Here is a 122-residue protein sequence, read N- to C-terminus: Large ribosomal subunit protein bL12 (122 aa).

The protein belongs to the bacterial ribosomal protein bL12 family. In terms of assembly, homodimer. Part of the ribosomal stalk of the 50S ribosomal subunit. Forms a multimeric L10(L12)X complex, where L10 forms an elongated spine to which 2 to 4 L12 dimers bind in a sequential fashion. Binds GTP-bound translation factors.

In terms of biological role, forms part of the ribosomal stalk which helps the ribosome interact with GTP-bound translation factors. Is thus essential for accurate translation. The sequence is that of Large ribosomal subunit protein bL12 from Dichelobacter nodosus (strain VCS1703A).